The following is a 201-amino-acid chain: ADP-ribosylation factor-like protein 4D (201 aa).

Gly2 carries N-myristoyl glycine lipidation. GTP-binding positions include 28–35 (GLDSAGKT), 76–80 (DVGGQ), and 135–138 (NKQD).

This sequence belongs to the small GTPase superfamily. Arf family. Interacts with CYTH2; the interaction is direct and ARL4D GTP-dependent. Does not interact with ARL4D.

Its subcellular location is the nucleus. The protein localises to the nucleolus. It is found in the cell membrane. The protein resides in the cytoplasm. In terms of biological role, small GTP-binding protein which cycles between an inactive GDP-bound and an active GTP-bound form, and the rate of cycling is regulated by guanine nucleotide exchange factors (GEF) and GTPase-activating proteins (GAP). GTP-binding protein that does not act as an allosteric activator of the cholera toxin catalytic subunit. Recruits CYTH1, CYTH2, CYTH3 and CYTH4 to the plasma membrane in GDP-bound form. In Mus musculus (Mouse), this protein is ADP-ribosylation factor-like protein 4D (Arl4d).